The primary structure comprises 1159 residues: ABC transporter G family member 24 (1159 aa).

2 helical membrane-spanning segments follow: residues 11–31 (FNSILKSILLLLLLFINGNNC) and 415–435 (VGSGVGFIGLTLLIGAIFLIF). One can recognise an ABC transporter domain in the interval 454 to 707 (LSFHNISCYV…FIKQKIAGMT (254 aa)). Position 497-504 (497-504 (GLSGSGKT)) interacts with ATP. The tract at residues 752–846 (QSTSPALSSN…DNNNKNNDDD (95 aa)) is disordered. Low complexity-rich tracts occupy residues 759–768 (SSNSNNSDIN) and 775–784 (INNPHNQNIH). The span at 785–795 (HQQHHHHHRHI) shows a compositional bias: basic residues. Positions 822 to 841 (DNINNNNNNNKVKNNDNNNK) are enriched in low complexity. The ABC transmembrane type-2 domain maps to 902–1154 (FLLRTTYFVH…LLAYVFLRFL (253 aa)). 6 consecutive transmembrane segments (helical) span residues 909-929 (FVHIFVGLTLGYLFWKLPANL), 937-957 (FGAMFFMTALLSFGSITSLDL), 1005-1025 (YMIGLRPGILHFIYFLISLVL), 1047-1067 (ANMVSILLLFVFLLFDGFLLA), 1074-1094 (YLIGLVWISFMSYGLEIPVVN), and 1135-1155 (VLLGMIVGYLLLAYVFLRFLV).

This sequence belongs to the ABC transporter superfamily. ABCG family. Eye pigment precursor importer (TC 3.A.1.204) subfamily.

It localises to the membrane. This chain is ABC transporter G family member 24 (abcG24), found in Dictyostelium discoideum (Social amoeba).